Consider the following 257-residue polypeptide: Serine/arginine-rich splicing factor 1 (257 aa).

Residue Ser-2 is modified to N-acetylserine. In terms of domain architecture, RRM 1 spans 16–91 (CRIYVGNLPP…YRLRVEFPRS (76 aa)). The interval 88–116 (FPRSGRGTGRGGGGGGGGGAPRGRYGPPS) is disordered. Over residues 93–108 (RGTGRGGGGGGGGGAP) the composition is skewed to gly residues. In terms of domain architecture, RRM 2 spans 121 to 195 (YRVIVSGLPP…ETAYIRVKVD (75 aa)).

The protein localises to the cytoplasm. It localises to the nucleus speckle. Its function is as follows. May play a role in preventing exon skipping, ensuring the accuracy of splicing and regulating alternative splicing. The polypeptide is Serine/arginine-rich splicing factor 1 (SRSF1) (Gallus gallus (Chicken)).